Reading from the N-terminus, the 155-residue chain is uncharacterized protein (155 aa).

Residues 4-65 (IDEIDEIIVR…VVDTSFFGEF (62 aa)) form the HTH asnC-type domain. Residues 23 to 42 (LTELGKKVGLTASAVKNRIE) constitute a DNA-binding region (H-T-H motif).

This is an uncharacterized protein from Pyrococcus abyssi (strain GE5 / Orsay).